The following is a 453-amino-acid chain: Trypanin (453 aa).

Positions 1 to 10 (MPPRTAAERG) are enriched in basic and acidic residues. The interval 1 to 22 (MPPRTAAERGGRRKSVKAPPPV) is disordered. Coiled-coil stretches lie at residues 60–156 (TITK…EMNV) and 185–377 (SCEA…LVEE).

It belongs to the DRC4 family.

It is found in the cytoplasm. The protein localises to the cytoskeleton. It localises to the cell projection. The protein resides in the cilium. Its subcellular location is the flagellum. Cytoskeletal linker that plays a central role in the flagellum cell motility. Required for directional cell motility. Plays a role as part of a dynein regulatory system that regulates flagellar beat in response to signals from the central pair apparatus and radial spokes in procyclic cells. Also plays an essential role in the bloodstream form of the trypanosomes as its silencing is lethal for the circulating form. The sequence is that of Trypanin from Trypanosoma brucei rhodesiense.